The sequence spans 265 residues: Ubiquinone biosynthesis protein COQ4 homolog, mitochondrial (265 aa).

The transit peptide at methionine 1–arginine 30 directs the protein to the mitochondrion. Serine 108 bears the Phosphoserine mark. Zn(2+) contacts are provided by histidine 163, aspartate 164, histidine 167, and glutamate 179.

Belongs to the COQ4 family. As to quaternary structure, component of a multi-subunit COQ enzyme complex, composed of at least COQ3, COQ4, COQ5, COQ6, COQ7 and COQ9. Zn(2+) is required as a cofactor. Expressed ubiquitously, but at high levels in liver, lung and pancreas.

Its subcellular location is the mitochondrion inner membrane. It carries out the reaction 4-hydroxy-3-methoxy-5-(all-trans-decaprenyl)benzoate + H(+) = 2-methoxy-6-(all-trans-decaprenyl)phenol + CO2. The protein operates within cofactor biosynthesis; ubiquinone biosynthesis. Lyase that catalyzes the C1-decarboxylation of 4-hydroxy-3-methoxy-5-(all-trans-decaprenyl)benzoic acid into 2-methoxy-6-(all-trans-decaprenyl)phenol during ubiquinone biosynthesis. This Homo sapiens (Human) protein is Ubiquinone biosynthesis protein COQ4 homolog, mitochondrial.